A 348-amino-acid chain; its full sequence is tRNA N6-adenosine threonylcarbamoyltransferase (348 aa).

H111 and H115 together coordinate Fe cation. Residues 134 to 138 (LVSGG), D167, G180, D184, and N280 each bind substrate. D308 contributes to the Fe cation binding site.

This sequence belongs to the KAE1 / TsaD family. Fe(2+) serves as cofactor.

It is found in the cytoplasm. It catalyses the reaction L-threonylcarbamoyladenylate + adenosine(37) in tRNA = N(6)-L-threonylcarbamoyladenosine(37) in tRNA + AMP + H(+). Its function is as follows. Required for the formation of a threonylcarbamoyl group on adenosine at position 37 (t(6)A37) in tRNAs that read codons beginning with adenine. Is involved in the transfer of the threonylcarbamoyl moiety of threonylcarbamoyl-AMP (TC-AMP) to the N6 group of A37, together with TsaE and TsaB. TsaD likely plays a direct catalytic role in this reaction. The protein is tRNA N6-adenosine threonylcarbamoyltransferase of Rippkaea orientalis (strain PCC 8801 / RF-1) (Cyanothece sp. (strain PCC 8801)).